We begin with the raw amino-acid sequence, 228 residues long: Large ribosomal subunit protein uL3 (228 aa).

The tract at residues 157–176 is disordered; it reads CHRHAGGTGMSASPSRTFKG.

Belongs to the universal ribosomal protein uL3 family. Part of the 50S ribosomal subunit. Forms a cluster with proteins L14 and L19.

One of the primary rRNA binding proteins, it binds directly near the 3'-end of the 23S rRNA, where it nucleates assembly of the 50S subunit. In Rhodopirellula baltica (strain DSM 10527 / NCIMB 13988 / SH1), this protein is Large ribosomal subunit protein uL3.